The primary structure comprises 271 residues: Large ribosomal subunit protein uL15c (271 aa).

2 disordered regions span residues methionine 1 to proline 21 and serine 66 to arginine 120. The transit peptide at methionine 1 to alanine 61 directs the protein to the chloroplast. Positions serine 66–serine 76 are enriched in low complexity. Basic residues predominate over residues serine 91–glycine 101. The span at histidine 102 to methionine 114 shows a compositional bias: gly residues.

As to quaternary structure, component of the chloroplast large ribosomal subunit (LSU). Mature 70S chloroplast ribosomes of higher plants consist of a small (30S) and a large (50S) subunit. The 30S small subunit contains 1 molecule of ribosomal RNA (16S rRNA) and 24 different proteins. The 50S large subunit contains 3 rRNA molecules (23S, 5S and 4.5S rRNA) and 33 different proteins.

It localises to the plastid. It is found in the chloroplast. Component of the chloroplast ribosome (chloro-ribosome), a dedicated translation machinery responsible for the synthesis of chloroplast genome-encoded proteins, including proteins of the transcription and translation machinery and components of the photosynthetic apparatus. The sequence is that of Large ribosomal subunit protein uL15c (RPL15) from Spinacia oleracea (Spinach).